Here is a 251-residue protein sequence, read N- to C-terminus: MALRLFRKSSFFAKISMEGPKGSSPFAFYAFYQLYSHLNPGKSSSLSLEDIRRRLYPDFKIDYNEKTSLFITWKKKSNKHHTIDTNEENYILRGCIGTFAKMPIAHGIEKYSLIAALEDRRFSPIQKRELVDLKCSCNILGNFKTIFRGGGNPNGDIFDWELGKHGIELYFKHPKTGTTCSATFLPDVMPEQHWNKEDTFANLIEKAGYWGNISEVMDNFETYFIEVIRYEGKKSSITYEEFNKQLKDIEA.

The AMMECR1 domain occupies lysine 21–leucine 246.

This is an uncharacterized protein from Saccharomyces cerevisiae (strain ATCC 204508 / S288c) (Baker's yeast).